The chain runs to 490 residues: Bifunctional IPC transferase and DIPP synthase (490 aa).

The tract at residues 72 to 290 (LMKAVILAAG…RANRALVSAA (219 aa)) is mobA-like NTP transferase. CTP-binding positions include 78 to 80 (LAA), K91, D144, and E180. A Mg(2+)-binding site is contributed by E180. A CDP-alcohol phosphatidyltransferases region spans residues 291-490 (VKGSGDGFIS…VTLLAVLVSK (200 aa)). 4 consecutive transmembrane segments (helical) span residues 329-349 (FLVG…AGLL), 389-409 (FLAI…FAIF), 447-467 (IFLI…IFWM), and 468-488 (FLFV…AVLV).

The protein in the N-terminal section; belongs to the MobA family. It in the C-terminal section; belongs to the CDP-alcohol phosphatidyltransferase class-I family. In terms of assembly, forms a mixture of monomers and dimers in solution, with prevalence of the monomeric form. Requires Mg(2+) as cofactor.

It localises to the membrane. It catalyses the reaction 1D-myo-inositol 3-phosphate + CTP + H(+) = CDP-1L-myo-inositol + diphosphate. The catalysed reaction is CDP-1L-myo-inositol + 1D-myo-inositol 3-phosphate = bis(1L-myo-inositol) 3,1'-phosphate 1-phosphate + CMP + H(+). Functionally, involved in biosynthesis of di-myo-inositol phosphate (DIP), a widespread organic solute in microorganisms adapted to hot environments. Catalyzes the condensation of CTP and L-myo-inositol-1-phosphate into CDP-L-myo-inositol, as well as the biosynthesis of di-myo-inositol-1,3'-phosphate-1'-phosphate (DIPP) from CDP-L-myo-inositol and L-myo-inositol-1-phosphate. The cytidylyltransferase is absolutely specific for CTP and L-myo-inositol-1-P. The DIPP synthase uses only L-myoinositol-1-phosphate as an alcohol acceptor, but CDP-glycerol, as well as CDP-L-myo-inositol and CDP-D-myoinositol, are recognized as alcohol donors. This is Bifunctional IPC transferase and DIPP synthase from Archaeoglobus fulgidus (strain ATCC 49558 / DSM 4304 / JCM 9628 / NBRC 100126 / VC-16).